Consider the following 234-residue polypeptide: GTP-binding protein YPT52 (234 aa).

Residues 10–17 (GDSSVGKS), 66–70 (DTAGQ), and 111–114 (NKVG) contribute to the GTP site. Disordered regions lie at residues 131–151 (QETP…EEQK) and 206–234 (NRQI…SCCS). The span at 132–142 (ETPSTETSPDS) shows a compositional bias: polar residues. Phosphoserine is present on residues serine 139 and serine 142. A Glycyl lysine isopeptide (Lys-Gly) (interchain with G-Cter in ubiquitin) cross-link involves residue lysine 151. The span at 217–234 (VDINLQRPSTNDPTSCCS) shows a compositional bias: polar residues. S-geranylgeranyl cysteine attachment occurs at residues cysteine 232 and cysteine 233.

Belongs to the small GTPase superfamily. Rab family. Interacts with ROY1, YIF1, YIP3, YIP4 and YIP5.

It localises to the cell membrane. The protein resides in the endoplasmic reticulum. In terms of biological role, required for transport in the endocytic pathway and for correct sorting of the vacuolar hydrolases suggesting a possible intersection of the endocytic with the vacuolar sorting pathway. May be involved in recruiting the MON1-CCZ1 complex to membranes enriched in phosphatidylinositol 3-phosphate (PtdIns[3]P) or other charged lipids, leading to recruitment of YPT7. The chain is GTP-binding protein YPT52 (YPT52) from Saccharomyces cerevisiae (strain ATCC 204508 / S288c) (Baker's yeast).